The primary structure comprises 586 residues: Arginine--tRNA ligase (586 aa).

A 'HIGH' region motif is present at residues 131–141; it reads ANPTGPMHVGH.

The protein belongs to the class-I aminoacyl-tRNA synthetase family. As to quaternary structure, monomer.

The protein resides in the cytoplasm. The catalysed reaction is tRNA(Arg) + L-arginine + ATP = L-arginyl-tRNA(Arg) + AMP + diphosphate. In Rhizobium rhizogenes (strain K84 / ATCC BAA-868) (Agrobacterium radiobacter), this protein is Arginine--tRNA ligase.